Reading from the N-terminus, the 438-residue chain is PHAF1 protein CG7083 (438 aa).

The protein belongs to the PHAF1 family.

Its subcellular location is the cytoplasm. It is found in the preautophagosomal structure. May play a regulatory role in autophagic activity. The polypeptide is PHAF1 protein CG7083 (Drosophila melanogaster (Fruit fly)).